A 272-amino-acid chain; its full sequence is Protein FAM210A (272 aa).

A DUF1279 domain is found at 117 to 229; it reads DKSISLYQRF…GYMSTPPPVK (113 aa). A helical transmembrane segment spans residues 136-156; it reads VLIPVHLITSGVWFGTFYYAA. Residues 229–271 adopt a coiled-coil conformation; that stretch reads KEYLQDRMEETKELITEKMEETKDRLTEKLQETKEKVSFKKKV. The tract at residues 246–272 is disordered; it reads KMEETKDRLTEKLQETKEKVSFKKKVE.

This sequence belongs to the FAM210 family. In terms of assembly, interacts with ATAD3A.

It is found in the membrane. The protein resides in the mitochondrion. The protein localises to the cytoplasm. May play a role in the structure and strength of both muscle and bone. The chain is Protein FAM210A (FAM210A) from Homo sapiens (Human).